A 210-amino-acid chain; its full sequence is Large ribosomal subunit protein bL25 (210 aa).

The interval Met1–Thr23 is disordered.

The protein belongs to the bacterial ribosomal protein bL25 family. CTC subfamily. As to quaternary structure, part of the 50S ribosomal subunit; part of the 5S rRNA/L5/L18/L25 subcomplex. Contacts the 5S rRNA. Binds to the 5S rRNA independently of L5 and L18.

This is one of the proteins that binds to the 5S RNA in the ribosome where it forms part of the central protuberance. The protein is Large ribosomal subunit protein bL25 of Rhodospirillum rubrum (strain ATCC 11170 / ATH 1.1.1 / DSM 467 / LMG 4362 / NCIMB 8255 / S1).